We begin with the raw amino-acid sequence, 95 residues long: Aspartyl/glutamyl-tRNA(Asn/Gln) amidotransferase subunit C (95 aa).

This sequence belongs to the GatC family. As to quaternary structure, heterotrimer of A, B and C subunits.

It catalyses the reaction L-glutamyl-tRNA(Gln) + L-glutamine + ATP + H2O = L-glutaminyl-tRNA(Gln) + L-glutamate + ADP + phosphate + H(+). The catalysed reaction is L-aspartyl-tRNA(Asn) + L-glutamine + ATP + H2O = L-asparaginyl-tRNA(Asn) + L-glutamate + ADP + phosphate + 2 H(+). Functionally, allows the formation of correctly charged Asn-tRNA(Asn) or Gln-tRNA(Gln) through the transamidation of misacylated Asp-tRNA(Asn) or Glu-tRNA(Gln) in organisms which lack either or both of asparaginyl-tRNA or glutaminyl-tRNA synthetases. The reaction takes place in the presence of glutamine and ATP through an activated phospho-Asp-tRNA(Asn) or phospho-Glu-tRNA(Gln). This chain is Aspartyl/glutamyl-tRNA(Asn/Gln) amidotransferase subunit C, found in Bartonella bacilliformis (strain ATCC 35685 / KC583 / Herrer 020/F12,63).